A 188-amino-acid chain; its full sequence is UPF0397 protein LCK_00164 (188 aa).

Helical transmembrane passes span 15–35, 48–68, 79–99, 121–141, and 154–174; these read VVATGIGAAVFFVLMKFIAIP, GWLALIAGLFGPVVGLLVGLI, GAPWWSWVIADGVFGLLLGFG, WQAVSNVLVWVIIAPLGDIII, and AVTTVVNTISVAIIGSLLLVA.

This sequence belongs to the UPF0397 family.

The protein resides in the cell membrane. This is UPF0397 protein LCK_00164 from Leuconostoc citreum (strain KM20).